The following is a 356-amino-acid chain: MSTVTITDLARENVRNLTPYQSARRLGGNGDVWLNANEYPTAVEFQLTQQTLNRYPECQPKAVIENYAQYAGVKAEQVLVSRGADEGIELLIRAFCEPGKDAILYCPPTYGMYSVSAETIGVECRTVPTLKNWQLDLQGISDKLDGVKVVYVCSPNNPTGQLINPQDFRTLLELTRGKAIVVADEAYIEFCPQASLAGWLAEYPHLAILRTLSKAFALAGLRCGFTLANEEVINLLMKVIAPYPLSTPVADIAAQALSPQGIVAMRERVAQIIAEREYLMAALKEIPCVEQVFDSETNYILARFKASSAVFKSLWDQGIILRDQNKQPSLSGCLRITVGTREESQRVIDALRAEQV.

Position 214 is an N6-(pyridoxal phosphate)lysine (K214).

Belongs to the class-II pyridoxal-phosphate-dependent aminotransferase family. Histidinol-phosphate aminotransferase subfamily. In terms of assembly, homodimer. The cofactor is pyridoxal 5'-phosphate.

It carries out the reaction L-histidinol phosphate + 2-oxoglutarate = 3-(imidazol-4-yl)-2-oxopropyl phosphate + L-glutamate. The protein operates within amino-acid biosynthesis; L-histidine biosynthesis; L-histidine from 5-phospho-alpha-D-ribose 1-diphosphate: step 7/9. This chain is Histidinol-phosphate aminotransferase, found in Escherichia coli (strain SMS-3-5 / SECEC).